A 118-amino-acid polypeptide reads, in one-letter code: Large ribosomal subunit protein bL20 (118 aa).

This sequence belongs to the bacterial ribosomal protein bL20 family.

Its function is as follows. Binds directly to 23S ribosomal RNA and is necessary for the in vitro assembly process of the 50S ribosomal subunit. It is not involved in the protein synthesizing functions of that subunit. In Desulfotalea psychrophila (strain LSv54 / DSM 12343), this protein is Large ribosomal subunit protein bL20.